We begin with the raw amino-acid sequence, 72 residues long: AEKTAQACEEAEKATKCARQGTGKTGDKHNCAFRKGKDGKEEPEKEKCCDGSFLVNKKFALMVYDFVSLLAF.

Asp-50 carries the GPI-anchor amidated aspartate lipid modification. A propeptide spans 51–72 (removed in mature form); that stretch reads GSFLVNKKFALMVYDFVSLLAF.

The protein resides in the cell membrane. Functionally, VSG forms a coat on the surface of the parasite. The trypanosome evades the immune response of the host by expressing a series of antigenically distinct VSGs from an estimated 1000 VSG genes. The chain is Variant surface glycoprotein MITAT 1.1000BC from Trypanosoma brucei brucei.